The following is a 682-amino-acid chain: Tail-specific protease (682 aa).

Residues 1–22 form the signal peptide; it reads MNTFFRLTALAGLLALAGQSFA. Residues 238 to 322 enclose the PDZ domain; it reads NTEMSLSLEG…SKVRLEILPA (85 aa). Residues serine 452, aspartate 463, and lysine 477 each act as charge relay system in the active site.

This sequence belongs to the peptidase S41A family.

It localises to the cell inner membrane. The catalysed reaction is The enzyme shows specific recognition of a C-terminal tripeptide, Xaa-Yaa-Zaa, in which Xaa is preferably Ala or Leu, Yaa is preferably Ala or Tyr, and Zaa is preferably Ala, but then cleaves at a variable distance from the C-terminus. A typical cleavage is -Ala-Ala-|-Arg-Ala-Ala-Lys-Glu-Asn-Tyr-Ala-Leu-Ala-Ala.. In terms of biological role, involved in the cleavage of a C-terminal peptide of 11 residues from the precursor form of penicillin-binding protein 3 (PBP3). May be involved in protection of the bacterium from thermal and osmotic stresses. This chain is Tail-specific protease (prc), found in Salmonella typhimurium (strain LT2 / SGSC1412 / ATCC 700720).